A 184-amino-acid polypeptide reads, in one-letter code: Shikimate kinase (184 aa).

ATP is bound at residue 20–25; it reads GVGKSR. Serine 24 serves as a coordination point for Mg(2+). 3 residues coordinate substrate: aspartate 42, arginine 66, and glycine 88. Position 127 (arginine 127) interacts with ATP. Arginine 146 is a binding site for substrate. ATP is bound at residue arginine 162.

Belongs to the shikimate kinase family. In terms of assembly, monomer. The cofactor is Mg(2+).

It is found in the cytoplasm. The enzyme catalyses shikimate + ATP = 3-phosphoshikimate + ADP + H(+). The protein operates within metabolic intermediate biosynthesis; chorismate biosynthesis; chorismate from D-erythrose 4-phosphate and phosphoenolpyruvate: step 5/7. Catalyzes the specific phosphorylation of the 3-hydroxyl group of shikimic acid using ATP as a cosubstrate. In Thermus thermophilus (strain ATCC 27634 / DSM 579 / HB8), this protein is Shikimate kinase.